A 661-amino-acid polypeptide reads, in one-letter code: mRNA 3'-end-processing protein RNA14 (661 aa).

The segment at 1 to 37 (MSGNETPDAGTVKSVSPSSGGSSLPARPTLRERDPND) is disordered. Residues 14 to 23 (SVSPSSGGSS) are compositionally biased toward low complexity. HAT repeat units lie at residues 67 to 99 (QQVA…WELE), 101 to 135 (EESG…YVRR), 149 to 181 (TVLK…FLEQ), 192 to 225 (SRVE…WEQE), 262 to 298 (SLPT…WELD), 307 to 339 (VLRQ…FVDE), and 513 to 548 (YNLD…FFEK).

The protein localises to the nucleus. It is found in the cytoplasm. Its function is as follows. Component of the cleavage factor IA (CFIA) complex, which is involved in the endonucleolytic cleavage during polyadenylation-dependent pre-mRNA 3'-end formation. The chain is mRNA 3'-end-processing protein RNA14 (RNA14) from Eremothecium gossypii (strain ATCC 10895 / CBS 109.51 / FGSC 9923 / NRRL Y-1056) (Yeast).